A 100-amino-acid chain; its full sequence is Small ribosomal subunit protein uS14c (100 aa).

The protein belongs to the universal ribosomal protein uS14 family. As to quaternary structure, part of the 30S ribosomal subunit.

The protein resides in the plastid. It localises to the chloroplast. Binds 16S rRNA, required for the assembly of 30S particles. This Cyanidium caldarium (Red alga) protein is Small ribosomal subunit protein uS14c.